A 134-amino-acid polypeptide reads, in one-letter code: Terepressin/terephysin (134 aa).

A signal peptide spans 1 to 33; that stretch reads MKCSVLQMSRLSWTACVLLLPLLLLTLQGGVQG. C34 and C39 are joined by a disulfide. Positions 44-50 are excised as a propeptide; it reads KRAVDSV. Cystine bridges form between C56–C100, C59–C73, C67–C90, C74–C80, C107–C121, C115–C133, and C122–C127.

It belongs to the vasopressin/oxytocin family. Post-translationally, contains 7 disulfide bonds. As to expression, expressed by the venom duct.

The protein resides in the secreted. In Terebra anilis (Auger snail), this protein is Terepressin/terephysin.